The chain runs to 96 residues: Co-chaperonin GroES (96 aa).

This sequence belongs to the GroES chaperonin family. As to quaternary structure, heptamer of 7 subunits arranged in a ring. Interacts with the chaperonin GroEL.

It localises to the cytoplasm. Together with the chaperonin GroEL, plays an essential role in assisting protein folding. The GroEL-GroES system forms a nano-cage that allows encapsulation of the non-native substrate proteins and provides a physical environment optimized to promote and accelerate protein folding. GroES binds to the apical surface of the GroEL ring, thereby capping the opening of the GroEL channel. The sequence is that of Co-chaperonin GroES from Nitrosococcus oceani (strain ATCC 19707 / BCRC 17464 / JCM 30415 / NCIMB 11848 / C-107).